The sequence spans 117 residues: Large ribosomal subunit protein bL20 (117 aa).

This sequence belongs to the bacterial ribosomal protein bL20 family.

In terms of biological role, binds directly to 23S ribosomal RNA and is necessary for the in vitro assembly process of the 50S ribosomal subunit. It is not involved in the protein synthesizing functions of that subunit. This is Large ribosomal subunit protein bL20 from Mannheimia succiniciproducens (strain KCTC 0769BP / MBEL55E).